Here is a 305-residue protein sequence, read N- to C-terminus: Aquaporin NIP6-1 (305 aa).

A disordered region spans residues 1 to 30; that stretch reads MDHEEIPSTPSTPATTPGTPGAPLFGGFEG. A compositionally biased stretch (low complexity) spans 7-23; sequence PSTPSTPATTPGTPGAP. 2 helical membrane passes run 82–102 and 111–131; these read LGAE…TAIV and TLIG…LSTG. The NPA 1 signature appears at 139-141; that stretch reads NPA. Transmembrane regions (helical) follow at residues 159 to 179, 194 to 214, and 221 to 241; these read VYIG…KAVF, LSQA…VVTA, and AVGE…ILIA. An NPA 2 motif is present at residues 250–252; sequence NPV. The helical transmembrane segment at 267-287 threads the bilayer; the sequence is IWVYLTAPILGALIGAGTYTI. Ser302 is subject to Phosphoserine.

Belongs to the MIP/aquaporin (TC 1.A.8) family. NIP (TC 1.A.8.12) subfamily. Expressed in roots.

It is found in the membrane. In terms of biological role, transports glycerol, urea and formamide, in Xenopus laevis oocytes. Very low water transport activity. The polypeptide is Aquaporin NIP6-1 (NIP6-1) (Arabidopsis thaliana (Mouse-ear cress)).